Here is a 159-residue protein sequence, read N- to C-terminus: Bacterioferritin (159 aa).

The 145-residue stretch at 1 to 145 (MQGDPDVLRL…TQLELMDKLG (145 aa)) folds into the Ferritin-like diiron domain. Residues E18 and E51 each contribute to the Fe cation site. M52 provides a ligand contact to heme b. 4 residues coordinate Fe cation: H54, E94, E127, and H130.

This sequence belongs to the bacterioferritin family. In terms of assembly, homooligomer of 24 subunits, arranged as 12 dimers, that are packed together to form an approximately spherical molecule with a central cavity, in which large amounts of iron can be deposited. The cofactor is heme b.

It carries out the reaction 4 Fe(2+) + O2 + 4 H(+) = 4 Fe(3+) + 2 H2O. It catalyses the reaction Fe(2+)(in) = Fe(2+)(out). Its function is as follows. Iron-storage protein, whose ferroxidase center binds Fe(2+), oxidizes it using dioxygen to Fe(3+), and participates in the subsequent Fe(3+) oxide mineral core formation within the central cavity of the BFR protein shell. In Mycobacterium bovis (strain ATCC BAA-935 / AF2122/97), this protein is Bacterioferritin (bfr).